Consider the following 806-residue polypeptide: Volume-regulated anion channel subunit LRRC8E (806 aa).

Residues 1-22 (MIPVAEFKQFTEQQPAFKVLKP) are Cytoplasmic-facing. Residues 23 to 43 (WWDVLAEYITYAMLMIGVFGC) form a helical membrane-spanning segment. Topologically, residues 44–130 (TLQVTQDKII…YETALHWYAK (87 aa)) are extracellular. Residues cysteine 54 and cysteine 311 are joined by a disulfide bond. Residues asparagine 57 and asparagine 80 are each glycosylated (N-linked (GlcNAc...) asparagine). The segment covering 72–81 (YDQQSPPSND) has biased composition (polar residues). Residues 72 to 103 (YDQQSPPSNDSDLETTIPPPTATSSPPREMSG) form a disordered region. Residues 131-151 (YFPYLVVIHTLIFIICGNFWF) traverse the membrane as a helical segment. Topologically, residues 152–275 (KFPGTSSKIE…MRQTVLKVCK (124 aa)) are cytoplasmic. Residues 182–213 (EVSGESSQEKPSQERSIDRELSKPNFEEGSPA) form a disordered region. Basic and acidic residues predominate over residues 188 to 207 (SQEKPSQERSIDRELSKPNF). The chain crosses the membrane as a helical span at residues 276 to 296 (FVLITIYNAVLVGKIHFIVPC). Topologically, residues 297 to 323 (SVHTEDMTGYNSFCCNHTKAHLFSKLA) are extracellular. N-linked (GlcNAc...) asparagine glycosylation is present at asparagine 312. A helical transmembrane segment spans residues 324 to 344 (ITYLCFLGVYGLTCLYTLYWL). Over 345–806 (FRRPLKEYSF…VEVRDKLKED (462 aa)) the chain is Cytoplasmic. LRR repeat units lie at residues 544–566 (LKSL…VADV), 569–589 (HLQK…NALK), 593–614 (LVKE…VFSL), 616–637 (NLQV…ISLQ), 641–662 (KLSV…IRKL), 664–685 (GLEE…LFLC), 687–708 (KLRH…IGVL), 710–731 (LLQY…LFFC), 733–754 (KLKT…VGSL), and 756–777 (CLVK…LGNC).

Belongs to the LRRC8 family. As to quaternary structure, heterohexamer; oligomerizes with other LRRC8 proteins (lrrc8a, lrrc8c, lrrc8d and/or lrrc8b) to form a heterohexamer. Detected in a channel complex that contains lrrc8a, lrrc8c and lrrc8e. In vivo, the subunit composition may depend primarily on expression levels, and heterooligomeric channels containing various proportions of the different LRRC8 proteins may coexist.

It is found in the cell membrane. The protein localises to the endoplasmic reticulum membrane. It localises to the lysosome membrane. It carries out the reaction chloride(in) = chloride(out). It catalyses the reaction iodide(out) = iodide(in). The catalysed reaction is taurine(out) = taurine(in). The enzyme catalyses 2',3'-cGAMP(out) = 2',3'-cGAMP(in). Its function is as follows. Non-essential component of the volume-regulated anion channel (VRAC, also named VSOAC channel), an anion channel required to maintain a constant cell volume in response to extracellular or intracellular osmotic changes. The VRAC channel conducts iodide better than chloride and can also conduct organic osmolytes like taurine. Mediates efflux of amino acids, such as aspartate, in response to osmotic stress. The VRAC channel also mediates transport of immunoreactive cyclic dinucleotide GMP-AMP (2'-3'-cGAMP), an immune messenger produced in response to DNA virus in the cytosol. Channel activity requires lrrc8a plus at least one other family member (lrrc8b, lrrc8c, lrrc8d or lrrc8e); channel characteristics depend on the precise subunit composition. Also plays a role in lysosome homeostasis by forming functional lysosomal VRAC channels in response to low cytoplasmic ionic strength condition: lysosomal VRAC channels are necessary for the formation of large lysosome-derived vacuoles, which store and then expel excess water to maintain cytosolic water homeostasis. This chain is Volume-regulated anion channel subunit LRRC8E, found in Xenopus tropicalis (Western clawed frog).